The primary structure comprises 610 residues: Phosphoenolpyruvate carboxykinase [GTP] (610 aa).

Substrate is bound by residues Arg-82 and 221–223 (YGG). 2 residues coordinate Mn(2+): Lys-230 and His-250. Ser-272 is a substrate binding site. 273 to 278 (ACGKTN) contributes to the GTP binding site. Residue Cys-274 is part of the active site. Residue Asp-297 coordinates Mn(2+). Residue 387–389 (NSR) participates in substrate binding. GTP contacts are provided by residues Arg-389, Arg-420, and 515-518 (FGDN).

Belongs to the phosphoenolpyruvate carboxykinase [GTP] family. In terms of assembly, monomer. Mn(2+) serves as cofactor.

The protein localises to the cytoplasm. It carries out the reaction oxaloacetate + GTP = phosphoenolpyruvate + GDP + CO2. It functions in the pathway carbohydrate biosynthesis; gluconeogenesis. In terms of biological role, catalyzes the conversion of oxaloacetate (OAA) to phosphoenolpyruvate (PEP), the rate-limiting step in the metabolic pathway that produces glucose from lactate and other precursors derived from the citric acid cycle. This chain is Phosphoenolpyruvate carboxykinase [GTP], found in Corynebacterium glutamicum (strain R).